We begin with the raw amino-acid sequence, 237 residues long: Uridylate kinase (237 aa).

10–13 contacts ATP; it reads KLSG. Residue glycine 51 coordinates UMP. Glycine 52 and arginine 56 together coordinate ATP. Residues aspartate 71 and 133–140 each bind UMP; that span reads TGNPCFTT. ATP contacts are provided by threonine 160, tyrosine 166, and aspartate 169.

This sequence belongs to the UMP kinase family. In terms of assembly, homohexamer.

It is found in the cytoplasm. It carries out the reaction UMP + ATP = UDP + ADP. It participates in pyrimidine metabolism; CTP biosynthesis via de novo pathway; UDP from UMP (UMPK route): step 1/1. With respect to regulation, inhibited by UTP. Its function is as follows. Catalyzes the reversible phosphorylation of UMP to UDP. This chain is Uridylate kinase, found in Vesicomyosocius okutanii subsp. Calyptogena okutanii (strain HA).